Reading from the N-terminus, the 232-residue chain is Ribose-5-phosphate isomerase A (232 aa).

Substrate is bound by residues 28–31 (TGST), 83–86 (DGAD), and 96–99 (KGGG). The Proton acceptor role is filled by E105. K123 provides a ligand contact to substrate.

It belongs to the ribose 5-phosphate isomerase family. Homodimer.

The catalysed reaction is aldehydo-D-ribose 5-phosphate = D-ribulose 5-phosphate. The protein operates within carbohydrate degradation; pentose phosphate pathway; D-ribose 5-phosphate from D-ribulose 5-phosphate (non-oxidative stage): step 1/1. Functionally, catalyzes the reversible conversion of ribose-5-phosphate to ribulose 5-phosphate. This Rhodopseudomonas palustris (strain HaA2) protein is Ribose-5-phosphate isomerase A.